Here is a 77-residue protein sequence, read N- to C-terminus: Large ribosomal subunit protein uL29 (77 aa).

The protein belongs to the universal ribosomal protein uL29 family.

The polypeptide is Large ribosomal subunit protein uL29 (Mycobacterium avium (strain 104)).